A 372-amino-acid polypeptide reads, in one-letter code: MTLYCKRGYKGYLYLEDGTLIEGCGFGAKGIRAGEVVFTTSMNGYPESLTDPSYRGQILVITHPLVGNYGVPEKQRVEGILTNFESEQIQVEGLVVSEETDPFKWNSSKSLHEWLLSEGVPGLSDVDTRSIVKKVRSRGVMMGVIASGYEIEDPKKFLEKKYDEIDFTQFTSPKAPIVHLGNTGETIVVVDCGVKHGILYQLHQRGFTIVRVPCKFNVSKIMDYYPKGVVFGNGPGNPNLLQEVIENFKELTEYKIPILGICLGHQVATLAMGGKVNKMKFGHRAINKPVIDISSNKCYITTHNHGYGILSKEDLPPNSKLWFINPDDGTIEGWIHEKLPIITTQFHPEARPGPWDVTWVFDKFKKMVSRNA.

The tract at residues 1-182 (MTLYCKRGYK…PKAPIVHLGN (182 aa)) is CPSase. Residues S53, G234, and G236 each contribute to the L-glutamine site. In terms of domain architecture, Glutamine amidotransferase type-1 spans 186–372 (TIVVVDCGVK…KFKKMVSRNA (187 aa)). The active-site Nucleophile is C262. Positions 263, 266, 304, 306, and 307 each coordinate L-glutamine. Active-site residues include H347 and E349.

The protein belongs to the CarA family. As to quaternary structure, composed of two chains; the small (or glutamine) chain promotes the hydrolysis of glutamine to ammonia, which is used by the large (or ammonia) chain to synthesize carbamoyl phosphate. Tetramer of heterodimers (alpha,beta)4.

It carries out the reaction hydrogencarbonate + L-glutamine + 2 ATP + H2O = carbamoyl phosphate + L-glutamate + 2 ADP + phosphate + 2 H(+). It catalyses the reaction L-glutamine + H2O = L-glutamate + NH4(+). The protein operates within amino-acid biosynthesis; L-arginine biosynthesis; carbamoyl phosphate from bicarbonate: step 1/1. It participates in pyrimidine metabolism; UMP biosynthesis via de novo pathway; (S)-dihydroorotate from bicarbonate: step 1/3. In terms of biological role, small subunit of the glutamine-dependent carbamoyl phosphate synthetase (CPSase). CPSase catalyzes the formation of carbamoyl phosphate from the ammonia moiety of glutamine, carbonate, and phosphate donated by ATP, constituting the first step of 2 biosynthetic pathways, one leading to arginine and/or urea and the other to pyrimidine nucleotides. The small subunit (glutamine amidotransferase) binds and cleaves glutamine to supply the large subunit with the substrate ammonia. In Sulfurisphaera tokodaii (strain DSM 16993 / JCM 10545 / NBRC 100140 / 7) (Sulfolobus tokodaii), this protein is Carbamoyl phosphate synthase small chain.